The sequence spans 654 residues: Fructose-1,6-bisphosphatase class 3 (654 aa).

The tract at residues 288–307 is disordered; that stretch reads NPAFKPKKRPDKHERLTQRE. Positions 298–307 are enriched in basic and acidic residues; the sequence is DKHERLTQRE.

This sequence belongs to the FBPase class 3 family. It depends on Mn(2+) as a cofactor.

It carries out the reaction beta-D-fructose 1,6-bisphosphate + H2O = beta-D-fructose 6-phosphate + phosphate. The protein operates within carbohydrate biosynthesis; gluconeogenesis. This chain is Fructose-1,6-bisphosphatase class 3, found in Staphylococcus aureus (strain Mu3 / ATCC 700698).